The primary structure comprises 95 residues: Protein TusB (95 aa).

The protein belongs to the DsrH/TusB family. As to quaternary structure, heterohexamer, formed by a dimer of trimers. The hexameric TusBCD complex contains 2 copies each of TusB, TusC and TusD. The TusBCD complex interacts with TusE.

The protein localises to the cytoplasm. In terms of biological role, part of a sulfur-relay system required for 2-thiolation of 5-methylaminomethyl-2-thiouridine (mnm(5)s(2)U) at tRNA wobble positions. The protein is Protein TusB of Yersinia enterocolitica serotype O:8 / biotype 1B (strain NCTC 13174 / 8081).